The chain runs to 1241 residues: ATP-dependent helicase/nuclease subunit A (1241 aa).

One can recognise a UvrD-like helicase ATP-binding domain in the interval 12–485; the sequence is SQWTDDQWKA…IDLAKNFRSR (474 aa). 33 to 40 provides a ligand contact to ATP; the sequence is AAAGSGKT. A UvrD-like helicase C-terminal domain is found at 505–805; it reads GEIDYDADAE…RIMTIHKSKG (301 aa).

The protein belongs to the helicase family. AddA subfamily. In terms of assembly, heterodimer of AddA and AddB/RexB. Mg(2+) serves as cofactor.

It carries out the reaction Couples ATP hydrolysis with the unwinding of duplex DNA by translocating in the 3'-5' direction.. The catalysed reaction is ATP + H2O = ADP + phosphate + H(+). In terms of biological role, the heterodimer acts as both an ATP-dependent DNA helicase and an ATP-dependent, dual-direction single-stranded exonuclease. Recognizes the chi site generating a DNA molecule suitable for the initiation of homologous recombination. The AddA nuclease domain is required for chi fragment generation; this subunit has the helicase and 3' -&gt; 5' nuclease activities. This chain is ATP-dependent helicase/nuclease subunit A, found in Bacillus thuringiensis (strain Al Hakam).